Here is an 88-residue protein sequence, read N- to C-terminus: Large ribosomal subunit protein eL31 (88 aa).

The protein belongs to the eukaryotic ribosomal protein eL31 family.

The sequence is that of Large ribosomal subunit protein eL31 from Methanoregula boonei (strain DSM 21154 / JCM 14090 / 6A8).